We begin with the raw amino-acid sequence, 159 residues long: Ribosomal RNA large subunit methyltransferase H (159 aa).

S-adenosyl-L-methionine-binding positions include I76, G108, and 127–132 (FSKMTF).

It belongs to the RNA methyltransferase RlmH family. Homodimer.

Its subcellular location is the cytoplasm. It catalyses the reaction pseudouridine(1915) in 23S rRNA + S-adenosyl-L-methionine = N(3)-methylpseudouridine(1915) in 23S rRNA + S-adenosyl-L-homocysteine + H(+). In terms of biological role, specifically methylates the pseudouridine at position 1915 (m3Psi1915) in 23S rRNA. The polypeptide is Ribosomal RNA large subunit methyltransferase H (Clostridium botulinum (strain Loch Maree / Type A3)).